We begin with the raw amino-acid sequence, 245 residues long: Zinc import ATP-binding protein ZnuC (245 aa).

The ABC transporter domain occupies 27–244; the sequence is LTADSLTLFY…AKFLSVFPNN (218 aa). An ATP-binding site is contributed by 59-66; that stretch reads GPNGGGKT.

This sequence belongs to the ABC transporter superfamily. Zinc importer (TC 3.A.1.15.5) family. The complex is composed of two ATP-binding proteins (ZnuC), two transmembrane proteins (ZnuB) and a solute-binding protein (ZnuA).

The protein resides in the cell inner membrane. The catalysed reaction is Zn(2+)(out) + ATP(in) + H2O(in) = Zn(2+)(in) + ADP(in) + phosphate(in) + H(+)(in). Part of the ABC transporter complex ZnuABC involved in zinc import. Responsible for energy coupling to the transport system. The protein is Zinc import ATP-binding protein ZnuC of Anaplasma marginale (strain St. Maries).